The sequence spans 295 residues: Protoheme IX farnesyltransferase 2 (295 aa).

9 helical membrane passes run 9–29, 36–56, 83–103, 108–128, 135–155, 163–183, 209–229, 230–250, and 264–284; these read ITKP…FFLA, FALF…GCVF, LTLA…LLYV, LAAF…SLWL, GTLV…CAVS, VTLL…IAIF, IVLY…GGYA, GLGY…MAWG, and VFGF…VDSQ.

The protein belongs to the UbiA prenyltransferase family. Protoheme IX farnesyltransferase subfamily.

The protein localises to the cell inner membrane. It catalyses the reaction heme b + (2E,6E)-farnesyl diphosphate + H2O = Fe(II)-heme o + diphosphate. It functions in the pathway porphyrin-containing compound metabolism; heme O biosynthesis; heme O from protoheme: step 1/1. In terms of biological role, converts heme B (protoheme IX) to heme O by substitution of the vinyl group on carbon 2 of heme B porphyrin ring with a hydroxyethyl farnesyl side group. This Pseudomonas entomophila (strain L48) protein is Protoheme IX farnesyltransferase 2.